The chain runs to 200 residues: dTTP/UTP pyrophosphatase (200 aa).

Aspartate 73 (proton acceptor) is an active-site residue.

It belongs to the Maf family. YhdE subfamily. The cofactor is a divalent metal cation.

It localises to the cytoplasm. It carries out the reaction dTTP + H2O = dTMP + diphosphate + H(+). The enzyme catalyses UTP + H2O = UMP + diphosphate + H(+). Functionally, nucleoside triphosphate pyrophosphatase that hydrolyzes dTTP and UTP. May have a dual role in cell division arrest and in preventing the incorporation of modified nucleotides into cellular nucleic acids. The protein is dTTP/UTP pyrophosphatase of Chromohalobacter salexigens (strain ATCC BAA-138 / DSM 3043 / CIP 106854 / NCIMB 13768 / 1H11).